The chain runs to 94 residues: Integration host factor subunit beta (94 aa).

Belongs to the bacterial histone-like protein family. As to quaternary structure, heterodimer of an alpha and a beta chain.

Functionally, this protein is one of the two subunits of integration host factor, a specific DNA-binding protein that functions in genetic recombination as well as in transcriptional and translational control. The chain is Integration host factor subunit beta from Sodalis glossinidius (strain morsitans).